The primary structure comprises 291 residues: Putative butyrophilin-like protein 10 pseudogene (291 aa).

The N-terminal stretch at 1–26 is a signal peptide; that stretch reads MAVTCDPEAFLSICFVTLVFLQLPLA. The region spanning 27-146 is the Ig-like V-type domain; the sequence is SIWKADFDVT…GEATVQVQVA (120 aa). Residues 27–254 are Extracellular-facing; that stretch reads SIWKADFDVT…RSSQFTAWKA (228 aa). A disulfide bridge links Cys54 with Cys128. N-linked (GlcNAc...) asparagine glycosylation occurs at Asn59. A helical transmembrane segment spans residues 255–275; that stretch reads ALPLILVAMGLVIAGGICIFW. Residues 276–291 are Cytoplasmic-facing; that stretch reads KRQREKNKASLEEERE.

Belongs to the immunoglobulin superfamily. BTN/MOG family.

Its subcellular location is the membrane. The sequence is that of Putative butyrophilin-like protein 10 pseudogene from Homo sapiens (Human).